Here is a 466-residue protein sequence, read N- to C-terminus: Cysteine--tRNA ligase (466 aa).

Cysteine 33 contacts Zn(2+). A 'HIGH' region motif is present at residues 35–45; it reads PTVYDFAHIGN. Zn(2+)-binding residues include cysteine 221, histidine 246, and glutamate 250. Residues 279-283 carry the 'KMSKS' region motif; the sequence is KMSKS. Lysine 282 provides a ligand contact to ATP.

This sequence belongs to the class-I aminoacyl-tRNA synthetase family. As to quaternary structure, monomer. It depends on Zn(2+) as a cofactor.

The protein resides in the cytoplasm. The catalysed reaction is tRNA(Cys) + L-cysteine + ATP = L-cysteinyl-tRNA(Cys) + AMP + diphosphate. The sequence is that of Cysteine--tRNA ligase from Sinorhizobium medicae (strain WSM419) (Ensifer medicae).